We begin with the raw amino-acid sequence, 72 residues long: Neuropeptide IMFamide (72 aa).

The N-terminal stretch at 1-24 is a signal peptide; sequence MMRFTIGVVCLVAVLLSLAEVSEA. Phe-36 is subject to Phenylalanine amide. Positions 40–72 are excised as a propeptide; the sequence is GPTEYDQRGKTFTALCEIATEACQAWFPSTENK.

As to expression, expressed in corpora cardiaca (CC), corpora allata (CA), antennal lobe (AL) and gnathal ganglion (GNG) (at protein level). Expression detected in only a few animals (at protein level).

It localises to the secreted. The sequence is that of Neuropeptide IMFamide from Agrotis ipsilon (Black cutworm moth).